A 154-amino-acid chain; its full sequence is Protein FAM162A (154 aa).

The tract at residues 76 to 102 (RFKKEDEIPETVSLEMLDTAKNKMRVK) is required for proapoptotic activity. Residues 103-120 (ISYLMIALTVVGCICMVI) traverse the membrane as a helical segment.

Belongs to the UPF0389 family. As to quaternary structure, interacts with HSP90AB1; HSP90AB1 is essential for FAM162A mitochondrial localization and pro-apoptotic activity. Interacts with VDAC2; the interaction is probably involved in inducing mitochondrial permeability transition.

Its subcellular location is the mitochondrion membrane. Functionally, proposed to be involved in regulation of apoptosis; the exact mechanism may differ between cell types/tissues. May be involved in hypoxia-induced cell death of transformed cells implicating cytochrome C release and caspase activation (such as CASP9) and inducing mitochondrial permeability transition. May be involved in hypoxia-induced cell death of neuronal cells probably by promoting release of AIFM1 from mitochondria to cytoplasm and its translocation to the nucleus; however, the involvement of caspases has been reported conflictingly. This chain is Protein FAM162A (FAM162A), found in Pongo abelii (Sumatran orangutan).